Consider the following 459-residue polypeptide: Glycosyl hydrolase family 109 protein 1 (459 aa).

The segment at residues 1-31 (MHNIHRRHFLKAAGAVTAGLVTANIALNANA) is a signal peptide (tat-type signal). NAD(+)-binding positions include 64 to 65 (ER), aspartate 86, 135 to 138 (WEWH), 155 to 156 (EV), and asparagine 184. Residues tyrosine 213, arginine 232, 244–247 (YPTH), and tyrosine 326 contribute to the substrate site. Tyrosine 244 lines the NAD(+) pocket.

This sequence belongs to the Gfo/Idh/MocA family. Glycosyl hydrolase 109 subfamily. Requires NAD(+) as cofactor. Predicted to be exported by the Tat system. The position of the signal peptide cleavage has not been experimentally proven.

Functionally, glycosidase. This is Glycosyl hydrolase family 109 protein 1 from Shewanella sp. (strain MR-7).